Reading from the N-terminus, the 325-residue chain is Gamma-hemolysin component B (325 aa).

The signal sequence occupies residues 1 to 26; it reads MKMNKLVKSSVATSMALLLLSGTANA.

Belongs to the aerolysin family. Toxicity requires sequential binding and synergistic association of a class S and a class F component which form heterooligomeric complexes. HlgB (class F) associates with either hlgA thus forming an AB toxin or with hlgC thus forming a CB toxin. Interacts with host AMFR.

It localises to the secreted. In terms of biological role, toxin that seems to act by forming pores in the membrane of the cell. Has a hemolytic and a leucotoxic activity. Promotes host AMFR-mediated inflammation by mediating 'Lys-27'-linked ubiquitination of TAB3, TAK1-TAB3 complex formation and phosphorylation of TAK1/MAP3K7. In turn, activates host NF-kappa-B signaling pathway. The protein is Gamma-hemolysin component B (hlgB) of Staphylococcus aureus (strain NCTC 8325 / PS 47).